The sequence spans 178 residues: Bifunctional protein PyrR (178 aa).

The PRPP-binding motif lies at 99-111 (VVLVDDVIFKGRT).

Belongs to the purine/pyrimidine phosphoribosyltransferase family. PyrR subfamily.

It carries out the reaction UMP + diphosphate = 5-phospho-alpha-D-ribose 1-diphosphate + uracil. Regulates the transcription of the pyrimidine nucleotide (pyr) operon in response to exogenous pyrimidines. In terms of biological role, also displays a weak uracil phosphoribosyltransferase activity which is not physiologically significant. In Nostoc punctiforme (strain ATCC 29133 / PCC 73102), this protein is Bifunctional protein PyrR.